A 440-amino-acid polypeptide reads, in one-letter code: Thymidine phosphorylase (440 aa).

It belongs to the thymidine/pyrimidine-nucleoside phosphorylase family. As to quaternary structure, homodimer.

It catalyses the reaction thymidine + phosphate = 2-deoxy-alpha-D-ribose 1-phosphate + thymine. It functions in the pathway pyrimidine metabolism; dTMP biosynthesis via salvage pathway; dTMP from thymine: step 1/2. In terms of biological role, the enzymes which catalyze the reversible phosphorolysis of pyrimidine nucleosides are involved in the degradation of these compounds and in their utilization as carbon and energy sources, or in the rescue of pyrimidine bases for nucleotide synthesis. The chain is Thymidine phosphorylase from Salmonella dublin (strain CT_02021853).